We begin with the raw amino-acid sequence, 82 residues long: uncharacterized protein (82 aa).

This is an uncharacterized protein from Orgyia pseudotsugata multicapsid polyhedrosis virus (OpMNPV).